Here is a 113-residue protein sequence, read N- to C-terminus: Iron-sulfur cluster insertion protein ErpA (113 aa).

3 residues coordinate iron-sulfur cluster: Cys41, Cys105, and Cys107.

This sequence belongs to the HesB/IscA family. In terms of assembly, homodimer. The cofactor is iron-sulfur cluster.

Its function is as follows. Required for insertion of 4Fe-4S clusters for at least IspG. The sequence is that of Iron-sulfur cluster insertion protein ErpA from Photobacterium profundum (strain SS9).